The chain runs to 158 residues: S-ribosylhomocysteine lyase (158 aa).

3 residues coordinate Fe cation: His57, His61, and Cys125.

Belongs to the LuxS family. In terms of assembly, homodimer. Fe cation is required as a cofactor.

The catalysed reaction is S-(5-deoxy-D-ribos-5-yl)-L-homocysteine = (S)-4,5-dihydroxypentane-2,3-dione + L-homocysteine. Involved in the synthesis of autoinducer 2 (AI-2) which is secreted by bacteria and is used to communicate both the cell density and the metabolic potential of the environment. The regulation of gene expression in response to changes in cell density is called quorum sensing. Catalyzes the transformation of S-ribosylhomocysteine (RHC) to homocysteine (HC) and 4,5-dihydroxy-2,3-pentadione (DPD). The chain is S-ribosylhomocysteine lyase from Deinococcus radiodurans (strain ATCC 13939 / DSM 20539 / JCM 16871 / CCUG 27074 / LMG 4051 / NBRC 15346 / NCIMB 9279 / VKM B-1422 / R1).